The following is a 25-amino-acid chain: Defensin D3 (25 aa).

The protein belongs to the DEFL family. Group IV subfamily. In terms of tissue distribution, distributed in the epidermal cell layer of leaves and in the subepidermal layer region of stems. Not in roots.

The protein resides in the secreted. The protein localises to the cell wall. In terms of biological role, antimicrobial peptide. Active against Fusarium spp., Gram-positive and Gram-negative bacterial pathogens. This is Defensin D3 from Spinacia oleracea (Spinach).